The chain runs to 110 residues: Large ribosomal subunit protein eL34 (110 aa).

A disordered region spans residues 1–41 (MKNVLIHKGATYKTRSNRRRKVRTPSGKLVNRRVKKHSKKH). The span at 30 to 41 (VNRRVKKHSKKH) shows a compositional bias: basic residues.

Belongs to the eukaryotic ribosomal protein eL34 family.

The sequence is that of Large ribosomal subunit protein eL34 (RPL34) from Encephalitozoon cuniculi (strain GB-M1) (Microsporidian parasite).